Reading from the N-terminus, the 204-residue chain is Calexcitin-1 (204 aa).

EF-hand domains follow at residues Phe25–Ile61, Ser75–Lys110, and Trp115–Asp150. The Ca(2+) site is built by Asp39, Asn41, Ser43, Gln45, Asp50, Asp88, Asp90, Asp92, Glu99, Asp128, Ser130, Asp132, and Glu139.

This Caenorhabditis elegans protein is Calexcitin-1 (cex-1).